A 316-amino-acid chain; its full sequence is Lipoyl synthase (316 aa).

Residues Cys-61, Cys-66, Cys-72, Cys-87, Cys-91, Cys-94, and Ser-301 each coordinate [4Fe-4S] cluster. The region spanning 73–290 (FGKGTATFMI…ERAAIEMGFS (218 aa)) is the Radical SAM core domain.

Belongs to the radical SAM superfamily. Lipoyl synthase family. It depends on [4Fe-4S] cluster as a cofactor.

It localises to the cytoplasm. The catalysed reaction is [[Fe-S] cluster scaffold protein carrying a second [4Fe-4S](2+) cluster] + N(6)-octanoyl-L-lysyl-[protein] + 2 oxidized [2Fe-2S]-[ferredoxin] + 2 S-adenosyl-L-methionine + 4 H(+) = [[Fe-S] cluster scaffold protein] + N(6)-[(R)-dihydrolipoyl]-L-lysyl-[protein] + 4 Fe(3+) + 2 hydrogen sulfide + 2 5'-deoxyadenosine + 2 L-methionine + 2 reduced [2Fe-2S]-[ferredoxin]. The protein operates within protein modification; protein lipoylation via endogenous pathway; protein N(6)-(lipoyl)lysine from octanoyl-[acyl-carrier-protein]: step 2/2. Its function is as follows. Catalyzes the radical-mediated insertion of two sulfur atoms into the C-6 and C-8 positions of the octanoyl moiety bound to the lipoyl domains of lipoate-dependent enzymes, thereby converting the octanoylated domains into lipoylated derivatives. In Nitrosospira multiformis (strain ATCC 25196 / NCIMB 11849 / C 71), this protein is Lipoyl synthase.